Here is a 171-residue protein sequence, read N- to C-terminus: Crossover junction endodeoxyribonuclease RuvC (171 aa).

Active-site residues include aspartate 12, glutamate 72, and aspartate 144. The Mg(2+) site is built by aspartate 12, glutamate 72, and aspartate 144.

Belongs to the RuvC family. As to quaternary structure, homodimer which binds Holliday junction (HJ) DNA. The HJ becomes 2-fold symmetrical on binding to RuvC with unstacked arms; it has a different conformation from HJ DNA in complex with RuvA. In the full resolvosome a probable DNA-RuvA(4)-RuvB(12)-RuvC(2) complex forms which resolves the HJ. Mg(2+) serves as cofactor.

It is found in the cytoplasm. The enzyme catalyses Endonucleolytic cleavage at a junction such as a reciprocal single-stranded crossover between two homologous DNA duplexes (Holliday junction).. Functionally, the RuvA-RuvB-RuvC complex processes Holliday junction (HJ) DNA during genetic recombination and DNA repair. Endonuclease that resolves HJ intermediates. Cleaves cruciform DNA by making single-stranded nicks across the HJ at symmetrical positions within the homologous arms, yielding a 5'-phosphate and a 3'-hydroxyl group; requires a central core of homology in the junction. The consensus cleavage sequence is 5'-(A/T)TT(C/G)-3'. Cleavage occurs on the 3'-side of the TT dinucleotide at the point of strand exchange. HJ branch migration catalyzed by RuvA-RuvB allows RuvC to scan DNA until it finds its consensus sequence, where it cleaves and resolves the cruciform DNA. This is Crossover junction endodeoxyribonuclease RuvC from Afipia carboxidovorans (strain ATCC 49405 / DSM 1227 / KCTC 32145 / OM5) (Oligotropha carboxidovorans).